Consider the following 103-residue polypeptide: Large ribosomal subunit protein bL21 (103 aa).

This sequence belongs to the bacterial ribosomal protein bL21 family. As to quaternary structure, part of the 50S ribosomal subunit. Contacts protein L20.

Its function is as follows. This protein binds to 23S rRNA in the presence of protein L20. This Shewanella pealeana (strain ATCC 700345 / ANG-SQ1) protein is Large ribosomal subunit protein bL21.